A 322-amino-acid chain; its full sequence is HPr kinase/phosphorylase (322 aa).

Residues His146 and Lys167 contribute to the active site. 161 to 168 (GDSGLGKS) contacts ATP. A Mg(2+)-binding site is contributed by Ser168. Residue Asp185 is the Proton acceptor; for phosphorylation activity. Proton donor; for dephosphorylation activity of the active site. The important for the catalytic mechanism of both phosphorylation and dephosphorylation stretch occupies residues 209 to 218 (LEVRGLGLLD). Mg(2+) is bound at residue Glu210. Arg250 is a catalytic residue. An important for the catalytic mechanism of dephosphorylation region spans residues 271–276 (QVAAGR).

The protein belongs to the HPrK/P family. As to quaternary structure, homohexamer. Mg(2+) serves as cofactor.

It catalyses the reaction [HPr protein]-L-serine + ATP = [HPr protein]-O-phospho-L-serine + ADP + H(+). The catalysed reaction is [HPr protein]-O-phospho-L-serine + phosphate + H(+) = [HPr protein]-L-serine + diphosphate. In terms of biological role, catalyzes the ATP- as well as the pyrophosphate-dependent phosphorylation of a specific serine residue in HPr, a phosphocarrier protein of the phosphoenolpyruvate-dependent sugar phosphotransferase system (PTS). HprK/P also catalyzes the pyrophosphate-producing, inorganic phosphate-dependent dephosphorylation (phosphorolysis) of seryl-phosphorylated HPr (P-Ser-HPr). The chain is HPr kinase/phosphorylase from Burkholderia lata (strain ATCC 17760 / DSM 23089 / LMG 22485 / NCIMB 9086 / R18194 / 383).